The chain runs to 318 residues: Bis(5'-nucleosyl)-tetraphosphatase, symmetrical (318 aa).

Positions 269–318 (PGREVTGPAPVARAPRRPRERLGRQRSRGNRGNAGNTAVPAKPPVDTPQD) are disordered. Basic residues predominate over residues 282–297 (APRRPRERLGRQRSRG). Residues 309 to 318 (AKPPVDTPQD) are compositionally biased toward pro residues.

Belongs to the Ap4A hydrolase family.

It catalyses the reaction P(1),P(4)-bis(5'-adenosyl) tetraphosphate + H2O = 2 ADP + 2 H(+). Hydrolyzes diadenosine 5',5'''-P1,P4-tetraphosphate to yield ADP. The protein is Bis(5'-nucleosyl)-tetraphosphatase, symmetrical of Xanthomonas oryzae pv. oryzae (strain MAFF 311018).